We begin with the raw amino-acid sequence, 208 residues long: Guanylate kinase (208 aa).

The Guanylate kinase-like domain occupies 4–182; that stretch reads GQLYIISAPS…ALEELKSVFR (179 aa). 11–18 provides a ligand contact to ATP; sequence APSGAGKT.

Belongs to the guanylate kinase family.

The protein localises to the cytoplasm. It catalyses the reaction GMP + ATP = GDP + ADP. Functionally, essential for recycling GMP and indirectly, cGMP. In Hahella chejuensis (strain KCTC 2396), this protein is Guanylate kinase.